Here is a 273-residue protein sequence, read N- to C-terminus: 4-hydroxy-tetrahydrodipicolinate reductase (273 aa).

NAD(+) contacts are provided by residues 11 to 16 (GATGKM) and 106 to 108 (GTT). The active-site Proton donor/acceptor is the histidine 162. (S)-2,3,4,5-tetrahydrodipicolinate is bound at residue histidine 163. Lysine 166 (proton donor) is an active-site residue. 172 to 173 (GT) provides a ligand contact to (S)-2,3,4,5-tetrahydrodipicolinate.

Belongs to the DapB family.

The protein resides in the cytoplasm. The enzyme catalyses (S)-2,3,4,5-tetrahydrodipicolinate + NAD(+) + H2O = (2S,4S)-4-hydroxy-2,3,4,5-tetrahydrodipicolinate + NADH + H(+). It carries out the reaction (S)-2,3,4,5-tetrahydrodipicolinate + NADP(+) + H2O = (2S,4S)-4-hydroxy-2,3,4,5-tetrahydrodipicolinate + NADPH + H(+). The protein operates within amino-acid biosynthesis; L-lysine biosynthesis via DAP pathway; (S)-tetrahydrodipicolinate from L-aspartate: step 4/4. Catalyzes the conversion of 4-hydroxy-tetrahydrodipicolinate (HTPA) to tetrahydrodipicolinate. The polypeptide is 4-hydroxy-tetrahydrodipicolinate reductase (Synechococcus sp. (strain ATCC 27144 / PCC 6301 / SAUG 1402/1) (Anacystis nidulans)).